The following is a 123-amino-acid chain: UPF0102 protein MCA0184 (123 aa).

It belongs to the UPF0102 family.

The chain is UPF0102 protein MCA0184 from Methylococcus capsulatus (strain ATCC 33009 / NCIMB 11132 / Bath).